We begin with the raw amino-acid sequence, 197 residues long: dITP/XTP pyrophosphatase (197 aa).

Position 10-15 (Ser-10–Lys-15) interacts with substrate. The Mg(2+) site is built by Glu-41 and Asp-70. Asp-70 functions as the Proton acceptor in the catalytic mechanism. Substrate contacts are provided by residues Ser-71, Phe-154–Asp-157, Lys-177, and His-182–Arg-183.

This sequence belongs to the HAM1 NTPase family. In terms of assembly, homodimer. The cofactor is Mg(2+).

It carries out the reaction XTP + H2O = XMP + diphosphate + H(+). It catalyses the reaction dITP + H2O = dIMP + diphosphate + H(+). The catalysed reaction is ITP + H2O = IMP + diphosphate + H(+). Pyrophosphatase that catalyzes the hydrolysis of nucleoside triphosphates to their monophosphate derivatives, with a high preference for the non-canonical purine nucleotides XTP (xanthosine triphosphate), dITP (deoxyinosine triphosphate) and ITP. Seems to function as a house-cleaning enzyme that removes non-canonical purine nucleotides from the nucleotide pool, thus preventing their incorporation into DNA/RNA and avoiding chromosomal lesions. The polypeptide is dITP/XTP pyrophosphatase (Pseudomonas syringae pv. tomato (strain ATCC BAA-871 / DC3000)).